Consider the following 213-residue polypeptide: MDARILQDNDDTSLPVNQASVTRIHKKPGKPEAEAAVRTLLLWAGEDPDREGLLETPKRVAKAYQELFGGYSESPEEVLGTTFEEVAGYDDMVLVKDISFFSHCEHHMVPIIGKAHVAYLPEGRVVGLSKIARVVDIFARRLQTQESITAQIADSIQRILKPRGVAVMIEAEHMCMAMRSIRKQGSSTITTTFTGDFKEKADQQVRFMTLIRT.

Residues C104, H107, and C175 each contribute to the Zn(2+) site.

Belongs to the GTP cyclohydrolase I family. As to quaternary structure, homomer.

It carries out the reaction GTP + H2O = 7,8-dihydroneopterin 3'-triphosphate + formate + H(+). Its pathway is cofactor biosynthesis; 7,8-dihydroneopterin triphosphate biosynthesis; 7,8-dihydroneopterin triphosphate from GTP: step 1/1. This chain is GTP cyclohydrolase 1, found in Brucella suis (strain ATCC 23445 / NCTC 10510).